Reading from the N-terminus, the 469-residue chain is MSKKYDAGVKEYRDTYWTPDYIPLDTDLLACFKCTGQEGVPREEVAAAVAAESSTGTWSTVWSELLTDLEFYKGRCYRIEEVPGDKESFYAFIAYPLDLFEEGSVTNVLTSLVGNVFGFKALRHLRLEDIRFPLAFIKTCGGPPNGIQVERDRMNKYGRPLLGCTIKPKLGLSGKNYGRVVYECLRGGLDFTKDDENINSQPFQRWQNRFEFVAEAVKTAEQETGERKGHYLNCTANTPEEMYERAEFAKELGQPIIMHDYITGGFTANTGLARWCRKNGILLHIHRAMHAVIDRHPKHGIHFRVLAKCLRLSGGDQLHTGTVVGKLEGDRQTTLGYIDQLRESFVPEDRTRGNFFDQDWASMPGVFAVASGGIHVWHMPALVAIFGDDSVLQFGGGTHGHPWGSAAGAAANRVALEACVKARNAGREIEKESRDILLEAAKHSPELAIALETWKEIKFEFDTVDKLDV.

Substrate contacts are provided by asparagine 115 and threonine 165. The active-site Proton acceptor is lysine 167. A substrate-binding site is contributed by lysine 169. Residues lysine 193, aspartate 195, and glutamate 196 each coordinate Mg(2+). At lysine 193 the chain carries N6-carboxylysine. Histidine 286 acts as the Proton acceptor in catalysis. Positions 287, 319, and 371 each coordinate substrate.

This sequence belongs to the RuBisCO large chain family. Type I subfamily. In terms of assembly, heterohexadecamer of 8 large chains and 8 small chains. Mg(2+) is required as a cofactor.

It is found in the plastid. It localises to the organellar chromatophore. It carries out the reaction 2 (2R)-3-phosphoglycerate + 2 H(+) = D-ribulose 1,5-bisphosphate + CO2 + H2O. The catalysed reaction is D-ribulose 1,5-bisphosphate + O2 = 2-phosphoglycolate + (2R)-3-phosphoglycerate + 2 H(+). Functionally, ruBisCO catalyzes two reactions: the carboxylation of D-ribulose 1,5-bisphosphate, the primary event in carbon dioxide fixation, as well as the oxidative fragmentation of the pentose substrate. Both reactions occur simultaneously and in competition at the same active site. This chain is Ribulose bisphosphate carboxylase large chain, found in Paulinella chromatophora.